A 106-amino-acid chain; its full sequence is Chaperone modulatory protein CbpM (106 aa).

This sequence belongs to the CbpM family.

Interacts with CbpA and inhibits both the DnaJ-like co-chaperone activity and the DNA binding activity of CbpA. Together with CbpA, modulates the activity of the DnaK chaperone system. Does not inhibit the co-chaperone activity of DnaJ. This Coxiella burnetii (strain CbuK_Q154) (Coxiella burnetii (strain Q154)) protein is Chaperone modulatory protein CbpM.